The chain runs to 288 residues: Quinate/shikimate dehydrogenase (288 aa).

Residues Lys-71 and Asp-107 each contribute to the substrate site. Residues 132–135, 155–158, Lys-205, 232–235, and Gly-255 each bind NAD(+); these read AGGA, NRRD, and CVYN.

Belongs to the shikimate dehydrogenase family. As to quaternary structure, homodimer.

The enzyme catalyses L-quinate + NAD(+) = 3-dehydroquinate + NADH + H(+). The catalysed reaction is L-quinate + NADP(+) = 3-dehydroquinate + NADPH + H(+). It carries out the reaction shikimate + NADP(+) = 3-dehydroshikimate + NADPH + H(+). It catalyses the reaction shikimate + NAD(+) = 3-dehydroshikimate + NADH + H(+). The protein operates within metabolic intermediate biosynthesis; chorismate biosynthesis; chorismate from D-erythrose 4-phosphate and phosphoenolpyruvate: step 4/7. Its function is as follows. The actual biological function of YdiB remains unclear, nor is it known whether 3-dehydroshikimate or quinate represents the natural substrate. Catalyzes the reversible NAD-dependent reduction of both 3-dehydroshikimate (DHSA) and 3-dehydroquinate to yield shikimate (SA) and quinate, respectively. It can use both NAD or NADP for catalysis, however it has higher catalytic efficiency with NAD. The chain is Quinate/shikimate dehydrogenase from Shigella sonnei (strain Ss046).